A 969-amino-acid polypeptide reads, in one-letter code: Levansucrase (969 aa).

An N-terminal signal peptide occupies residues 1-52; the sequence is MDITVNSQSNTVAPKQAECKKMRYSIRKVATVGATSALVGTLAFLGATQVKA. Residues 89-103 are compositionally biased toward low complexity; sequence SEAVESSVAHSEVAT. The interval 89-169 is disordered; the sequence is SEAVESSVAH…STASSEAADT (81 aa). Over residues 106-116 the composition is skewed to polar residues; that stretch reads VTETQPSNTTP. A compositionally biased stretch (low complexity) spans 124-166; that stretch reads SSTVVTSSSDATTPSATVAAVSAPAHTSEAAVEAPTSTASSEA. Sucrose contacts are provided by tryptophan 286, aspartate 287, and serine 356. The active-site Nucleophile is the aspartate 287. Aspartate 443 provides a ligand contact to Ca(2+). 2 residues coordinate sucrose: arginine 448 and aspartate 449. Residues glutamine 473, asparagine 512, and aspartate 544 each contribute to the Ca(2+) site. Glutamate 545 is a sucrose binding site. The active-site Proton donor/acceptor is the glutamate 547. Arginine 565 serves as a coordination point for sucrose. Disordered regions lie at residues 746-843 and 860-934; these read VKDG…VGDR and IVAT…SEGS. Positions 747–758 are enriched in basic and acidic residues; the sequence is KDGKDKKADKPE. Positions 776–789 are enriched in polar residues; that stretch reads KPGTSKPADNNQPS. Over residues 872-910 the composition is skewed to basic and acidic residues; that stretch reads VKEESVTETEAPKPVKSEEKVQSHGVDKANEVTKSDESS. Residues 924-934 are compositionally biased toward polar residues; the sequence is TPKTPSDSEGS. A helical transmembrane segment spans residues 938–958; it reads ILSILATIFAAIASLALLGYG.

It belongs to the glycosyl hydrolase 68 family.

It localises to the cell membrane. Its subcellular location is the cell surface. It catalyses the reaction [6)-beta-D-fructofuranosyl-(2-&gt;](n) alpha-D-glucopyranoside + sucrose = [6)-beta-D-fructofuranosyl-(2-&gt;](n+1) alpha-D-glucopyranoside + D-glucose. With respect to regulation, ca(2+) may play an important structural role and promote stability of levansucrase. Functionally, catalyzes the synthesis of levan, a fructose polymer, by transferring the fructosyl moiety from sucrose to a growing acceptor molecule. Also displays sucrose hydrolase activity. This is Levansucrase from Streptococcus salivarius.